A 436-amino-acid polypeptide reads, in one-letter code: Citrate synthase (436 aa).

Catalysis depends on residues histidine 313 and aspartate 371.

Belongs to the citrate synthase family. As to quaternary structure, homohexamer.

It catalyses the reaction oxaloacetate + acetyl-CoA + H2O = citrate + CoA + H(+). Its pathway is carbohydrate metabolism; tricarboxylic acid cycle; isocitrate from oxaloacetate: step 1/2. The sequence is that of Citrate synthase (aarA) from Acetobacter aceti.